A 153-amino-acid polypeptide reads, in one-letter code: Small ribosomal subunit protein uS13 (153 aa).

The tract at residues 132–153 is disordered; sequence VRGQRTRSHHRKGRTVGVIKKK. Basic residues predominate over residues 135-153; it reads QRTRSHHRKGRTVGVIKKK.

It belongs to the universal ribosomal protein uS13 family. As to quaternary structure, part of the 30S ribosomal subunit. Forms a loose heterodimer with protein S19. Forms two bridges to the 50S subunit in the 70S ribosome.

Located at the top of the head of the 30S subunit, it contacts several helices of the 16S rRNA. In the 70S ribosome it contacts the 23S rRNA (bridge B1a) and protein L5 of the 50S subunit (bridge B1b), connecting the 2 subunits; these bridges are implicated in subunit movement. The sequence is that of Small ribosomal subunit protein uS13 from Nanoarchaeum equitans (strain Kin4-M).